The primary structure comprises 104 residues: Nucleoid-associated protein OB0030 (104 aa).

Positions 1-23 (MKGNMNNMMKQMQKMQKKMMQAQ) are disordered.

It belongs to the YbaB/EbfC family. In terms of assembly, homodimer.

The protein localises to the cytoplasm. Its subcellular location is the nucleoid. Binds to DNA and alters its conformation. May be involved in regulation of gene expression, nucleoid organization and DNA protection. The chain is Nucleoid-associated protein OB0030 from Oceanobacillus iheyensis (strain DSM 14371 / CIP 107618 / JCM 11309 / KCTC 3954 / HTE831).